The chain runs to 421 residues: Gamma-glutamyl phosphate reductase (421 aa).

The protein belongs to the gamma-glutamyl phosphate reductase family.

It localises to the cytoplasm. It catalyses the reaction L-glutamate 5-semialdehyde + phosphate + NADP(+) = L-glutamyl 5-phosphate + NADPH + H(+). The protein operates within amino-acid biosynthesis; L-proline biosynthesis; L-glutamate 5-semialdehyde from L-glutamate: step 2/2. Its function is as follows. Catalyzes the NADPH-dependent reduction of L-glutamate 5-phosphate into L-glutamate 5-semialdehyde and phosphate. The product spontaneously undergoes cyclization to form 1-pyrroline-5-carboxylate. This Herminiimonas arsenicoxydans protein is Gamma-glutamyl phosphate reductase.